The sequence spans 166 residues: Large ribosomal subunit protein uL10 (166 aa).

It belongs to the universal ribosomal protein uL10 family. In terms of assembly, part of the ribosomal stalk of the 50S ribosomal subunit. The N-terminus interacts with L11 and the large rRNA to form the base of the stalk. The C-terminus forms an elongated spine to which L12 dimers bind in a sequential fashion forming a multimeric L10(L12)X complex.

Its function is as follows. Forms part of the ribosomal stalk, playing a central role in the interaction of the ribosome with GTP-bound translation factors. The chain is Large ribosomal subunit protein uL10 from Pseudomonas fluorescens (strain SBW25).